Reading from the N-terminus, the 720-residue chain is Putative glutamine--fructose-6-phosphate aminotransferase [isomerizing] (720 aa).

Cysteine 2 functions as the Nucleophile; for GATase activity in the catalytic mechanism. A Glutamine amidotransferase type-2 domain is found at cysteine 2–glycine 321. Positions serine 266–proline 280 are enriched in polar residues. The interval serine 266 to leucine 285 is disordered. 2 consecutive SIS domains span residues tryptophan 393–serine 532 and cysteine 565–proline 710.

The enzyme catalyses D-fructose 6-phosphate + L-glutamine = D-glucosamine 6-phosphate + L-glutamate. It participates in nucleotide-sugar biosynthesis; UDP-N-acetyl-alpha-D-glucosamine biosynthesis; alpha-D-glucosamine 6-phosphate from D-fructose 6-phosphate: step 1/1. In terms of biological role, involved in amino sugar synthesis (formation of chitin, supplies the amino sugars of asparagine-linked oligosaccharides of glycoproteins). This is Putative glutamine--fructose-6-phosphate aminotransferase [isomerizing] from Saccharomyces cerevisiae (strain RM11-1a) (Baker's yeast).